A 374-amino-acid chain; its full sequence is Small ribosomal subunit protein uS4m (374 aa).

Residues 259-323 form the S4 RNA-binding domain; it reads GRLENFLMRL…KKLYFFIKSK (65 aa).

This sequence belongs to the universal ribosomal protein uS4 family.

The protein resides in the mitochondrion. This Acanthamoeba castellanii (Amoeba) protein is Small ribosomal subunit protein uS4m (RPS4).